A 358-amino-acid polypeptide reads, in one-letter code: PqqA peptide cyclase (358 aa).

The Radical SAM core domain maps to 4-219; that stretch reads PSPPMSLLAE…VEAERAKGGL (216 aa). 3 residues coordinate [4Fe-4S] cluster: Cys-18, Cys-22, and Cys-25.

The protein belongs to the radical SAM superfamily. PqqE family. In terms of assembly, interacts with PqqD. The interaction is necessary for activity of PqqE. Requires [4Fe-4S] cluster as cofactor.

It catalyses the reaction [PQQ precursor protein] + S-adenosyl-L-methionine = E-Y cross-linked-[PQQ precursor protein] + 5'-deoxyadenosine + L-methionine + H(+). It functions in the pathway cofactor biosynthesis; pyrroloquinoline quinone biosynthesis. In terms of biological role, catalyzes the cross-linking of a glutamate residue and a tyrosine residue in the PqqA protein as part of the biosynthesis of pyrroloquinoline quinone (PQQ). This is PqqA peptide cyclase from Gluconobacter oxydans (strain 621H) (Gluconobacter suboxydans).